The chain runs to 164 residues: MRVGLGYDVHKLGYNTPLILGGVNIPFNKGLIGHSDADVLVHAIMDALLGALSLGDIGKHFPPSDMKYKNISSLKLLNYVSNLIKSKGYSIGNIDSTIIAEEPKLFPYIPDMRLNIAKILKVNTSIISVKATTEEGLGFTGKKEGIAAQSICLLYNNLKHSIDL.

Positions 8 and 10 each coordinate a divalent metal cation. 4-CDP-2-C-methyl-D-erythritol 2-phosphate is bound by residues 8–10 and 34–35; these read DVH and HS. H42 contacts a divalent metal cation. 4-CDP-2-C-methyl-D-erythritol 2-phosphate-binding positions include 56 to 58, 132 to 135, F139, and K142; these read DIG and TTEE.

This sequence belongs to the IspF family. As to quaternary structure, homotrimer. A divalent metal cation is required as a cofactor.

The catalysed reaction is 4-CDP-2-C-methyl-D-erythritol 2-phosphate = 2-C-methyl-D-erythritol 2,4-cyclic diphosphate + CMP. The protein operates within isoprenoid biosynthesis; isopentenyl diphosphate biosynthesis via DXP pathway; isopentenyl diphosphate from 1-deoxy-D-xylulose 5-phosphate: step 4/6. Involved in the biosynthesis of isopentenyl diphosphate (IPP) and dimethylallyl diphosphate (DMAPP), two major building blocks of isoprenoid compounds. Catalyzes the conversion of 4-diphosphocytidyl-2-C-methyl-D-erythritol 2-phosphate (CDP-ME2P) to 2-C-methyl-D-erythritol 2,4-cyclodiphosphate (ME-CPP) with a corresponding release of cytidine 5-monophosphate (CMP). This chain is 2-C-methyl-D-erythritol 2,4-cyclodiphosphate synthase, found in Clostridium kluyveri (strain NBRC 12016).